We begin with the raw amino-acid sequence, 251 residues long: Exotoxin type A (251 aa).

The signal sequence occupies residues 1 to 30 (MENNKKVLKKMVFFVLVTFLGLTISQEVFA). A disulfide bond links cysteine 117 and cysteine 128.

It belongs to the staphylococcal/streptococcal toxin family.

Causative agent of the symptoms associated with scarlet fever, have been associated with streptococcal toxic shock-like disease and may play a role in the early events of rheumatic fever. This is Exotoxin type A (speA) from Streptococcus pyogenes serotype M18 (strain MGAS8232).